A 53-amino-acid polypeptide reads, in one-letter code: HOXB-AS3 peptide (53 aa).

The disordered stretch occupies residues 1-53; sequence MPVLPGTQRYPHQRRRFQAAGGGAESGKRGSEEAPGVAWSGSESGRDAATPAW.

As to quaternary structure, interacts with HNRNPA1 (via the RGG-box). Interacts with IGF2BP2.

Blocks the binding of HNRNPA1 to the intronic sequences flanking exon 9 of the PKM gene by competitively binding to the HNRNPA1 RGG-box motif. This inhibits inclusion of exon 9 and promotes inclusion of exon 10, suppressing formation of the PKM M2 isoform and promoting production of the M1 isoform. Also suppresses HNRNPA1-mediated processing of microRNA 18a (miR-18a). Promotes MYC stability through interaction with IGF2BP2. This is HOXB-AS3 peptide from Homo sapiens (Human).